The chain runs to 212 residues: Pyrrolidone-carboxylate peptidase (212 aa).

Residues E80, C143, and H165 contribute to the active site.

Belongs to the peptidase C15 family. In terms of assembly, homotetramer.

The protein resides in the cytoplasm. The enzyme catalyses Release of an N-terminal pyroglutamyl group from a polypeptide, the second amino acid generally not being Pro.. Its function is as follows. Removes 5-oxoproline from various penultimate amino acid residues except L-proline. In Aliivibrio fischeri (strain MJ11) (Vibrio fischeri), this protein is Pyrrolidone-carboxylate peptidase.